A 204-amino-acid chain; its full sequence is uncharacterized protein (204 aa).

This is an uncharacterized protein from Rickettsia prowazekii (strain Madrid E).